A 530-amino-acid polypeptide reads, in one-letter code: Phosphoenolpyruvate carboxykinase (ATP) (530 aa).

Substrate contacts are provided by R58, Y195, and K201. ATP contacts are provided by residues K201, H220, and 236 to 244 (GLSGTGKTT). Mn(2+) contacts are provided by K201 and H220. Residue D257 participates in Mn(2+) binding. ATP contacts are provided by residues E285, R321, 440–441 (RI), and T446. Residue R321 coordinates substrate.

It belongs to the phosphoenolpyruvate carboxykinase (ATP) family. Requires Mn(2+) as cofactor.

The protein localises to the cytoplasm. The enzyme catalyses oxaloacetate + ATP = phosphoenolpyruvate + ADP + CO2. Its pathway is carbohydrate biosynthesis; gluconeogenesis. In terms of biological role, involved in the gluconeogenesis. Catalyzes the conversion of oxaloacetate (OAA) to phosphoenolpyruvate (PEP) through direct phosphoryl transfer between the nucleoside triphosphate and OAA. This is Phosphoenolpyruvate carboxykinase (ATP) from Staphylococcus aureus (strain MSSA476).